A 21-amino-acid polypeptide reads, in one-letter code: Peptide PGLa-R5 (21 aa).

Position 21 is a leucine amide (Leu21).

Expressed by the skin glands.

It is found in the secreted. Functionally, antimicrobial peptide. The chain is Peptide PGLa-R5 from Xenopus ruwenzoriensis (Uganda clawed frog).